Consider the following 232-residue polypeptide: Orotidine 5'-phosphate decarboxylase (232 aa).

Substrate contacts are provided by residues D13, K35, 62 to 71 (DLKFHDIPNT), T122, R182, Q191, G211, and R212. K64 (proton donor) is an active-site residue.

Belongs to the OMP decarboxylase family. Type 1 subfamily. Homodimer.

The enzyme catalyses orotidine 5'-phosphate + H(+) = UMP + CO2. It functions in the pathway pyrimidine metabolism; UMP biosynthesis via de novo pathway; UMP from orotate: step 2/2. In terms of biological role, catalyzes the decarboxylation of orotidine 5'-monophosphate (OMP) to uridine 5'-monophosphate (UMP). This chain is Orotidine 5'-phosphate decarboxylase, found in Pseudomonas aeruginosa (strain LESB58).